An 870-amino-acid polypeptide reads, in one-letter code: Probable inorganic carbon transporter subunit DabA (870 aa).

Residues Cys-381, Asp-383, His-564, and Cys-579 each coordinate Zn(2+).

The protein belongs to the inorganic carbon transporter (TC 9.A.2) DabA family. As to quaternary structure, forms a complex with DabB. Zn(2+) serves as cofactor.

It localises to the cell membrane. Part of an energy-coupled inorganic carbon pump. The protein is Probable inorganic carbon transporter subunit DabA of Geobacillus kaustophilus (strain HTA426).